Here is a 2626-residue protein sequence, read N- to C-terminus: Unconventional myosin-IXa (2626 aa).

In terms of domain architecture, Ras-associating spans 14-112; it reads NEHTLRIYPG…YRFLLREKNL (99 aa). In terms of domain architecture, Myosin motor spans 146–1017; that stretch reads KDFDDLCSLP…ERQHLQDLLH (872 aa). A helical membrane pass occupies residues 175–195; it reads IYTYVGSILIAINPFKFLPIY. 239 to 246 contacts ATP; that stretch reads GESGSGKT. Serine 755 is subject to Phosphoserine. The interval 908-919 is actin-binding; that stretch reads QAEPYFVKCIRS. IQ domains are found at residues 1021–1041, 1043–1072, 1075–1104, 1116–1145, and 1139–1168; these read LRRI…QQFL, LRQA…EKDA, MASA…AAVI, RHRA…KIIL, and QRNK…ERLK. A neck or regulatory domain region spans residues 1022 to 1163; that stretch reads RRIILLQRWF…RARQRYKALK (142 aa). The tract at residues 1164–2589 is tail; it reads EERLKETKLE…LKNVKNSPQK (1426 aa). Over residues 1221–1240 the composition is skewed to basic and acidic residues; that stretch reads RESSMDFSKESPDKQQERGR. Residues 1221–1276 form a disordered region; the sequence is RESSMDFSKESPDKQQERGRSQSGTDLQGDVIVRQRPKSLEDLHQKKVGRAKRESR. Serine 1243 is modified (phosphoserine). The residue at position 1245 (threonine 1245) is a Phosphothreonine. Position 1259 is a phosphoserine (serine 1259). A coiled-coil region spans residues 1265–1292; the sequence is QKKVGRAKRESRRMRELEQAIFSLELLK. The segment covering 1266–1276 has biased composition (basic residues); the sequence is KKVGRAKRESR. A phosphoserine mark is found at serine 1300 and serine 1318. Polar residues predominate over residues 1360-1375; the sequence is PSTFTNPKFDSQNNAL. Residues 1360–1397 form a disordered region; the sequence is PSTFTNPKFDSQNNALSASSETSSTFSGKGASSDSEHL. The span at 1376–1386 shows a compositional bias: low complexity; it reads SASSETSSTFS. Residues 1493 to 1540 adopt a coiled-coil conformation; that stretch reads TVLKKLEKLNIEKEKRQKQLQQQNEKEMMEQIRQQTDILEKERKAFKT. 5 disordered regions span residues 1562-1602, 1618-1673, 1689-1726, 1765-1784, and 1872-1907; these read VERP…PPKD, SRTV…SRPI, GNPQ…RMAR, SELG…SEMT, and QYHP…KRGV. Basic and acidic residues-rich tracts occupy residues 1620-1632 and 1659-1669; these read TVKE…RMGT and HRSDDPSREGS. Basic residues predominate over residues 1716 to 1726; sequence PAHKKKARMAR. Polar residues predominate over residues 1772-1784; it reads SLGQASHSDSEMT. Positions 1887–1899 are enriched in basic and acidic residues; sequence CRKEFKENKEPSP. Phosphoserine is present on serine 2016. The Phorbol-ester/DAG-type zinc-finger motif lies at 2067-2116; that stretch reads GHMFKATQYSIPTYCEYCSSLIWIMDRASVCKLCKYACHKKCCLKTTAKC. Residues 2131-2319 form the Rho-GAP domain; sequence VELSRLTSED…LIVVEQMNKY (189 aa). The tract at residues 2365–2385 is disordered; that stretch reads SGKGRLHRGSHPNPSSPVIVR. Position 2380 is a phosphoserine (serine 2380). Positions 2408 to 2444 form a coiled coil; sequence TDQQQAAMQQEEKVLTEQIENLQKEKEELTFEMLVLE. The tract at residues 2449–2527 is disordered; sequence DDEALESEAS…NTTSSHGTRK (79 aa). The span at 2504-2522 shows a compositional bias: low complexity; it reads SLDSVSSSVSSCLSNTTSS. Serine 2542 carries the phosphoserine modification. The tract at residues 2552–2614 is disordered; that stretch reads PLGQAKSLED…TVDSDCSSTQ (63 aa).

It belongs to the TRAFAC class myosin-kinesin ATPase superfamily. Myosin family. In terms of processing, phosphorylated by ALPK1 following monosodium urate monohydrate (MSU)-induced inflammation. As to expression, expressed at high levels in brain, followed by testis and spleen. Expressed at very low levels, in kidney. Detected abundantly in brain and testis and at lower levels in adrenal gland, kidney, lung and spleen (at protein level). In adrenal gland it is mostly found in the medulla but not in the cortex. In brain, it is found in the cerebellum and the CA2-CA3 regions of the hippocampus.

The protein localises to the membrane. Its subcellular location is the cytoplasm. It is found in the synapse. The protein resides in the cell projection. It localises to the growth cone. In terms of biological role, myosins are actin-based motor molecules with ATPase activity. Unconventional myosins serve in intracellular movements. Regulates Rho by stimulating it's GTPase activity in neurons. Required for the regulation of neurite branching and motor neuron axon guidance. This is Unconventional myosin-IXa (Myo9a) from Rattus norvegicus (Rat).